The primary structure comprises 333 residues: Serine/threonine-protein phosphatase 4 catalytic subunit 1 (333 aa).

The segment at 1-28 is disordered; sequence MALACTDSANSTFSRVDSPTSGPSDQLT. The segment covering 7-27 has biased composition (polar residues); sequence DSANSTFSRVDSPTSGPSDQL. 4 residues coordinate Mn(2+): D79, H81, D107, and N139. H140 (proton donor) is an active-site residue. Mn(2+) is bound by residues H189 and H264. At L333 the chain carries Leucine methyl ester.

Belongs to the PPP phosphatase family. PP-4 (PP-X) subfamily. As to quaternary structure, serine/threonine-protein phosphatase 4 (PP4) occurs in different assemblies of the catalytic and one or more regulatory subunits. The regulatory subunits are likely to be ppfr-1, ppfr-2, ppfr-4 and smk-1. Interacts with mei-1. Mn(2+) serves as cofactor. In terms of processing, methylation at the C-terminal Leu-333 is critical for interactions with regulatory subunits.

The protein resides in the cytoplasm. Its subcellular location is the cytoskeleton. It is found in the microtubule organizing center. The protein localises to the centrosome. The enzyme catalyses O-phospho-L-seryl-[protein] + H2O = L-seryl-[protein] + phosphate. It catalyses the reaction O-phospho-L-threonyl-[protein] + H2O = L-threonyl-[protein] + phosphate. Functionally, protein phosphatase which plays an essential role in meiosis and in early embryonic mitosis. During spermatocyte meiosis and the first embryonic mitosis, regulates centrosome maturation, and thus spindle formation, by recruiting some of the components of the pericentriolar material (PCM). During oocyte meiosis I, regulates meiotic chromosome dynamics including synapsis-independent chromosome pairing, restriction of synapsis to homologous chromosomes, programmed DNA double-strand break initiation and crossover formation resulting in chiasma formation. During oocyte meiosis II and probably together with regulatory subunit ppfr-1, may regulate microtubule severing by dephosphorylating and activating mei-1, a component of the katanin microtubule severing complex. The protein is Serine/threonine-protein phosphatase 4 catalytic subunit 1 of Caenorhabditis elegans.